Consider the following 375-residue polypeptide: Anhydro-N-acetylmuramic acid kinase (375 aa).

Position 18 to 25 (18 to 25) interacts with ATP; the sequence is GTSMDGID.

It belongs to the anhydro-N-acetylmuramic acid kinase family.

It carries out the reaction 1,6-anhydro-N-acetyl-beta-muramate + ATP + H2O = N-acetyl-D-muramate 6-phosphate + ADP + H(+). Its pathway is amino-sugar metabolism; 1,6-anhydro-N-acetylmuramate degradation. The protein operates within cell wall biogenesis; peptidoglycan recycling. Catalyzes the specific phosphorylation of 1,6-anhydro-N-acetylmuramic acid (anhMurNAc) with the simultaneous cleavage of the 1,6-anhydro ring, generating MurNAc-6-P. Is required for the utilization of anhMurNAc either imported from the medium or derived from its own cell wall murein, and thus plays a role in cell wall recycling. The sequence is that of Anhydro-N-acetylmuramic acid kinase from Rhodospirillum rubrum (strain ATCC 11170 / ATH 1.1.1 / DSM 467 / LMG 4362 / NCIMB 8255 / S1).